Consider the following 191-residue polypeptide: Peptidyl-tRNA hydrolase (191 aa).

Y17 is a tRNA binding site. Catalysis depends on H22, which acts as the Proton acceptor. TRNA is bound by residues Y68, N70, and N116.

It belongs to the PTH family. In terms of assembly, monomer.

It is found in the cytoplasm. It catalyses the reaction an N-acyl-L-alpha-aminoacyl-tRNA + H2O = an N-acyl-L-amino acid + a tRNA + H(+). In terms of biological role, hydrolyzes ribosome-free peptidyl-tRNAs (with 1 or more amino acids incorporated), which drop off the ribosome during protein synthesis, or as a result of ribosome stalling. Its function is as follows. Catalyzes the release of premature peptidyl moieties from peptidyl-tRNA molecules trapped in stalled 50S ribosomal subunits, and thus maintains levels of free tRNAs and 50S ribosomes. This chain is Peptidyl-tRNA hydrolase, found in Francisella tularensis subsp. holarctica (strain FTNF002-00 / FTA).